The following is a 1367-amino-acid chain: Insulin-like growth factor 1 receptor (1367 aa).

An N-terminal signal peptide occupies residues M1–G30. C33 and C52 are disulfide-bonded. Residues N51, N102, and N135 are each glycosylated (N-linked (GlcNAc...) asparagine). 13 cysteine pairs are disulfide-bonded: C150–C178, C182–C205, C192–C211, C215–C224, C219–C230, C231–C239, C235–C248, C251–C260, C264–C276, C282–C303, C307–C321, C324–C328, and C332–C353. N244 is a glycosylation site (N-linked (GlcNAc...) asparagine). N314 carries an N-linked (GlcNAc...) asparagine glycan. Residues N417 and N438 are each glycosylated (N-linked (GlcNAc...) asparagine). C455 and C488 are disulfide-bonded. Fibronectin type-III domains lie at D491–S609, V610–E708, P735–A828, and I834–K927. N-linked (GlcNAc...) asparagine glycans are attached at residues N534, N607, N622, N640, N747, N756, N764, N900, and N913. Topologically, residues D741 to H935 are extracellular. Residues L936–H959 form a helical membrane-spanning segment. Residues R960–C1367 lie on the Cytoplasmic side of the membrane. The IRS1- and SHC1-binding signature appears at N977 to Y980. At Y980 the chain carries Phosphotyrosine. A Protein kinase domain is found at I999 to F1274. Residues L1005–V1013 and K1033 each bind ATP. The active-site Proton acceptor is the D1135. Phosphotyrosine; by autocatalysis occurs at positions 1161, 1165, and 1166. Residues K1168 and K1171 each participate in a glycyl lysine isopeptide (Lys-Gly) (interchain with G-Cter in ubiquitin) cross-link. S1278 carries the phosphoserine; by GSK3-beta modification. S1282 is subject to Phosphoserine. Residues P1288–C1367 form a disordered region. Over residues P1290–N1299 the composition is skewed to acidic residues. Over residues M1300–L1316 the composition is skewed to low complexity. Residues P1317 to E1326 show a composition bias toward basic and acidic residues.

The protein belongs to the protein kinase superfamily. Tyr protein kinase family. Insulin receptor subfamily. In terms of assembly, tetramer of 2 alpha and 2 beta chains linked by disulfide bonds. The alpha chains contribute to the formation of the ligand-binding domain, while the beta chain carries the kinase domain. Interacts with PIK3R1 and with the PTB/PID domains of IRS1 and SHC1 in vitro when autophosphorylated on tyrosine residues. Forms a hybrid receptor with INSR, the hybrid is a tetramer consisting of 1 alpha chain and 1 beta chain of INSR and 1 alpha chain and 1 beta chain of IGF1R. Interacts with ARRB1 and ARRB2. Interacts with GRB10. Interacts with RACK1. Interacts with SOCS1, SOCS2 and SOCS3. Interacts with 14-3-3 proteins. Interacts with NMD2. Interacts with MAP3K5. Interacts with STAT3. Found in a ternary complex with IGF1 and ITGAV:ITGB3 or ITGA6:ITGB4. Interacts (nascent precursor form) with ZFAND2B. As to quaternary structure, (Microbial infection) Interacts with human respiratory syncytial virus (HRSV) fusion glycoprotein F1/F2 heterodimer. In terms of processing, autophosphorylated on tyrosine residues in response to ligand binding. Autophosphorylation occurs in trans, i.e. one subunit of the dimeric receptor phosphorylates tyrosine residues on the other subunit. Autophosphorylation occurs in a sequential manner; Tyr-1165 is predominantly phosphorylated first, followed by phosphorylation of Tyr-1161 and Tyr-1166. While every single phosphorylation increases kinase activity, all three tyrosine residues in the kinase activation loop (Tyr-1165, Tyr-1161 and Tyr-1166) have to be phosphorylated for optimal activity. Can be autophosphorylated at additional tyrosine residues (in vitro). Autophosphorylated is followed by phosphorylation of juxtamembrane tyrosines and C-terminal serines. May also be phosphorylated at Tyr-1161 and Tyr-1166 by mTORC2. Phosphorylation of Tyr-980 is required for IRS1- and SHC1-binding. Phosphorylation of Ser-1278 by GSK-3beta restrains kinase activity and promotes cell surface expression, it requires a priming phosphorylation at Ser-1282. Dephosphorylated by PTPN1. Post-translationally, polyubiquitinated at Lys-1168 and Lys-1171 through both 'Lys-48' and 'Lys-29' linkages, promoting receptor endocytosis and subsequent degradation by the proteasome. Ubiquitination is facilitated by pre-existing phosphorylation. Sumoylated with SUMO1. In terms of processing, controlled by regulated intramembrane proteolysis (RIP). Undergoes metalloprotease-dependent constitutive ectodomain shedding to produce a membrane-anchored 52 kDa C-Terminal fragment which is further processed by presenilin gamma-secretase to yield an intracellular 50 kDa fragment. In terms of tissue distribution, found as a hybrid receptor with INSR in muscle, heart, kidney, adipose tissue, skeletal muscle, hepatoma, fibroblasts, spleen and placenta (at protein level). Expressed in a variety of tissues. Overexpressed in tumors, including melanomas, cancers of the colon, pancreas prostate and kidney.

It is found in the cell membrane. It carries out the reaction L-tyrosyl-[protein] + ATP = O-phospho-L-tyrosyl-[protein] + ADP + H(+). Activated by autophosphorylation at Tyr-1165, Tyr-1161 and Tyr-1166 on the kinase activation loop; phosphorylation at all three tyrosine residues is required for optimal kinase activity. Inhibited by MSC1609119A-1, BMS-754807, PQIP, benzimidazole pyridinone, isoquinolinedione, bis-azaindole, 3-cyanoquinoline, 2,4-bis-arylamino-1,3-pyrimidine, pyrrolopyrimidine, pyrrole-5-carboxaldehyde, picropodophyllin (PPP), tyrphostin derivatives. While most inhibitors bind to the ATP binding pocket, MSC1609119A-1 functions as allosteric inhibitor and binds close to the DFG motif and the activation loop. Its function is as follows. Receptor tyrosine kinase which mediates actions of insulin-like growth factor 1 (IGF1). Binds IGF1 with high affinity and IGF2 and insulin (INS) with a lower affinity. The activated IGF1R is involved in cell growth and survival control. IGF1R is crucial for tumor transformation and survival of malignant cell. Ligand binding activates the receptor kinase, leading to receptor autophosphorylation, and tyrosines phosphorylation of multiple substrates, that function as signaling adapter proteins including, the insulin-receptor substrates (IRS1/2), Shc and 14-3-3 proteins. Phosphorylation of IRSs proteins lead to the activation of two main signaling pathways: the PI3K-AKT/PKB pathway and the Ras-MAPK pathway. The result of activating the MAPK pathway is increased cellular proliferation, whereas activating the PI3K pathway inhibits apoptosis and stimulates protein synthesis. Phosphorylated IRS1 can activate the 85 kDa regulatory subunit of PI3K (PIK3R1), leading to activation of several downstream substrates, including protein AKT/PKB. AKT phosphorylation, in turn, enhances protein synthesis through mTOR activation and triggers the antiapoptotic effects of IGFIR through phosphorylation and inactivation of BAD. In parallel to PI3K-driven signaling, recruitment of Grb2/SOS by phosphorylated IRS1 or Shc leads to recruitment of Ras and activation of the ras-MAPK pathway. In addition to these two main signaling pathways IGF1R signals also through the Janus kinase/signal transducer and activator of transcription pathway (JAK/STAT). Phosphorylation of JAK proteins can lead to phosphorylation/activation of signal transducers and activators of transcription (STAT) proteins. In particular activation of STAT3, may be essential for the transforming activity of IGF1R. The JAK/STAT pathway activates gene transcription and may be responsible for the transforming activity. JNK kinases can also be activated by the IGF1R. IGF1 exerts inhibiting activities on JNK activation via phosphorylation and inhibition of MAP3K5/ASK1, which is able to directly associate with the IGF1R. In terms of biological role, when present in a hybrid receptor with INSR, binds IGF1. PubMed:12138094 shows that hybrid receptors composed of IGF1R and INSR isoform Long are activated with a high affinity by IGF1, with low affinity by IGF2 and not significantly activated by insulin, and that hybrid receptors composed of IGF1R and INSR isoform Short are activated by IGF1, IGF2 and insulin. In contrast, PubMed:16831875 shows that hybrid receptors composed of IGF1R and INSR isoform Long and hybrid receptors composed of IGF1R and INSR isoform Short have similar binding characteristics, both bind IGF1 and have a low affinity for insulin. The chain is Insulin-like growth factor 1 receptor (IGF1R) from Homo sapiens (Human).